The following is a 360-amino-acid chain: tRNA-specific 2-thiouridylase MnmA (360 aa).

Residues 8–15 and Met-34 each bind ATP; that span reads GMSGGVDS. An interaction with target base in tRNA region spans residues 94 to 96; the sequence is NPD. Cys-99 acts as the Nucleophile in catalysis. A disulfide bridge links Cys-99 with Cys-195. Gly-123 contributes to the ATP binding site. Residues 145 to 147 form an interaction with tRNA region; it reads KDQ. The Cysteine persulfide intermediate role is filled by Cys-195. The interval 307–308 is interaction with tRNA; the sequence is RY.

This sequence belongs to the MnmA/TRMU family.

The protein localises to the cytoplasm. The catalysed reaction is S-sulfanyl-L-cysteinyl-[protein] + uridine(34) in tRNA + AH2 + ATP = 2-thiouridine(34) in tRNA + L-cysteinyl-[protein] + A + AMP + diphosphate + H(+). Functionally, catalyzes the 2-thiolation of uridine at the wobble position (U34) of tRNA, leading to the formation of s(2)U34. The polypeptide is tRNA-specific 2-thiouridylase MnmA (Methylobacillus flagellatus (strain ATCC 51484 / DSM 6875 / VKM B-1610 / KT)).